Reading from the N-terminus, the 153-residue chain is Antibacterial peptide PMAP-23 (153 aa).

Residues 1–29 (METQRASLCLGRWSLWLLLLGLVVPSASA) form the signal peptide. Position 30 is a pyrrolidone carboxylic acid (Gln-30). Positions 30–130 (QALSYREAVL…DITCNQLQSV (101 aa)) are excised as a propeptide. The interval 61-80 (DQPPKADEDPGTPKPVSFTV) is disordered. Intrachain disulfides connect Cys-85/Cys-96 and Cys-107/Cys-124.

This sequence belongs to the cathelicidin family.

It is found in the secreted. In terms of biological role, exerts antimicrobial activity against both Gram-positive and negative bacteria at concentrations of 2-16 micro molar. Its activity appears to be mediated by its ability to damage bacterial membranes. In Sus scrofa (Pig), this protein is Antibacterial peptide PMAP-23 (PMAP23).